A 2415-amino-acid polypeptide reads, in one-letter code: MENFTPKEVKILETVEDIQERREQVLSRYNDFKIETRQKREKLEDSRRFQYFKRDADELESWIHEKLQAASEESYRDPTNLQAKIQKHQAFEAEVSAHSNAIVSLDNTGQEMINQQHFASESIQVRLDELHKLWELLLSRLAEKGLKLQQALVLVQFLRQCEEVMFWIKDKETFVTADEFGQDLEHVEVLQRKFDEFQKDMASQEYRVTEVNQLADKLVQDGHPERDTITKRKEELNEAWQRLKQLAIVRQEKLFGAHEIQRFNRDADETVAWIAEKDVVLSSDDYGRDLASVQALQRKHEGVERDLAALEDKVSTLGAEAQRLCSIHADHSDQIRDKQAEIANYWQSLTTKARERKQKLDESYYLHRFLADFRDLVSWINGMKAIISADELAKDVAGAEALLERHQEHKGEIDAREDSFKLTTESGQKLLEREHYAAAEIQEKLAALENDKSSLLSLWEDRRILYEQCMDLQLFYRDTEQADTWMAKQEAFLANEDLGDSLDSVEALIKKHEDFEKSLAAQEEKIKALDIFATKLIDGQHYAADDVAQRRQMLLARRAALQEKSSKRRQLLEDSNRYQQFERDCDETKGWISEKLKFATDDSYLDPTNLNGKMQKHQNFEHELNANKSRIEDITNVGTELIEKQHYAADQINTRMQEIVVLWETLVQASDKKGTKLNEACQQQQFNRTIEDIELWLSEIEGQLLSEDHGKDLTSVQNLQKKHALLEADVMAHQDRIESIKVAANKFIESGHFDADNIRNKEGNLSARYAALAAPMGERKQHLLDSLQVQQLFRDLEDEAAWIREKEPIAASTNRGRDLIGVQNLIKKHQAVLAEINNHEARLLNVISSGENMLKDQPFASDDIRQRLEALQEQWNTLKEKSSQRKQDLDDSLQAHQYFADANEAESWMREKEPIATGSDYGKDEDSSEALLKKHEALVSDLEAFGNTIQALQEQAKNCRQQETPVVDITGKECVVALYDYTEKSPREVSMKKGDVLTLLNSNNKDWWKVEVNDRQGFVPAAYIKKIDAGLSASQQNLVDNHSIAKRQNQINSQYDNLLALARERQNKLNETVKAYVLVREAADLAQWIRDKENHAQIADVVGEDLEEVEVLQKKFDDFNDDLKANEVRLANMNEIAVQLTSLGQTEAALKIQTQMQDLNEKWNNLQTLTAEKASQLGSAHEVQRFHRDIDETKDWIAEKANALNNDDLGKDLRSVQTLQRKHEGVERDLAALRDKIRQLDETANRLMQSHPDTAEQTYAKQKEINEMWDQIITKSTARKEKLLDSYDLQRFLSDYRDLLAWINSMMSLVTSDELANDVTGAEALIERHQEHRTEIDARAGTFGAFEQFGNELLQANHYASPEIKEKIEDLAKAREDLEKAWTERRLQLEQNLDLQLYMRDCELAESWMSAREAFLNADDDANAGGNVEALIKKHEDFDKAINGHEQKIAALQTVADQLIAQNHYASNLVDEKRKQVLERWRHLKEGLIEKRSRLGDEQTLQQFSRDADEIENWIAEKLQLATEESYKDPANIQSKHQKHQAFEAELAANADRIQSVLAMGGNLIDKKQCSGSEDAVQKRLTQIADQWEYLTHKTTEKSLKLKEANKQRTYIAAVKDLDFWLGEVESLLTTEDSGKDLASVQNLMKKHQLVEADIVAHEDRIKDMNNQADSLVESGQFDTAGIQEKRQSINERYERICNLAAHRQARLNEALTLHQFFRDIADEESWIKEKKLLVGSDDYGRDLTGVQNLKKKHKRLEAELGSHEPAIQAVQEAGEKLMDVSNLGVPEIEQRLKALNQAWAELKNLAATRGQKLDESLTYQQFLAQVEEEEAWITEKQQLLSVEDYGDSMAAVQGLLKKHDAFETDFTAHKDRCSLICDQGSELVEAKNHHGESIAQRCQQLRLKLDNLSALAARRKGALLDNSAYLQFMWKADVVESWIDDKENYVRSDEFGRDLSTVQTLLTKQETFDAGLNAFEQEGIHNITALKDQLINASHAQSPAILKRHGDVIARWQKLRDASNTRKDRLLAMQEQFRQIEELYLTFAKKASAFNSWFENAEEDLTDPVRCNSIEEIRALRDAHAQFQASLSSAEADFKALAALDQKIKSFNVGPNPYTWFTMEALEETWRNLQKIIEERDGELAKEAKRQEENDKLRKEFAKHANLFHQWLTETRTSMMEGSGSLEQQLEALRVKATEVRARRVDLKKIEELGALLEEHLILDNRYTEHSTVGLAQQWDQLDQLSMRMQHNLEQQIQARNHSGVSEDSLKEFSMMFKHFDKDKSGKLNHQEFKSCLRALGYDLPMVEEGQPDPEFEAILDVVDPNRDGYVSLQEYIAFMISKETENVQSYEEIENAFRAITAADRPYVTKEELYCNLTKDMADYCVQRMKPFSEPRSGQPIKDALDYIDFTRTLFQN.

Spectrin repeat units follow at residues 48–150 (RFQY…KLQQ), 154–254 (LVQF…QEKL), 258–362 (HEIQ…KLDE), 366–464 (LHRF…DRRI), 471–574 (DLQL…LLED), 577–679 (RYQQ…KLNE), 683–784 (QQQF…QHLL), 788–890 (QVQQ…QDLD), and 894–963 (QAHQ…RQQE). Positions 970–1029 (TGKECVVALYDYTEKSPREVSMKKGDVLTLLNSNNKDWWKVEVNDRQGFVPAAYIKKIDA) constitute an SH3 domain. Phosphoserine occurs at positions 1032 and 1034. Spectrin repeat units follow at residues 1079-1177 (VREA…ASQL), 1181-1284 (HEVQ…EKLL), 1287-1391 (YDLQ…QLEQ), 1394-1496 (DLQL…SRLG), 1500-1604 (TLQQ…KLKE), 1608-1710 (QRTY…RLNE), 1714-1816 (LHQF…KLDE), 1820-1921 (YQQF…GALL), 1926-2028 (YLQF…DRLL), 2040-2141 (LYLT…DGEL), and 2154-2252 (LRKE…NLEQ). EF-hand domains follow at residues 2265-2300 (DSLK…LGYD) and 2308-2343 (QPDP…KETE). Ca(2+) contacts are provided by D2278, D2280, S2282, K2284, E2289, D2321, N2323, D2325, Y2327, and E2332.

This sequence belongs to the spectrin family. As to quaternary structure, native spectrin molecule is a tetramer composed of two antiparallel heterodimers joined head to head so that each end of the native molecule includes the C-terminus of the alpha subunit and the N-terminus of the beta subunit. Interacts with calmodulin in a calcium-dependent manner, interacts with F-actin and also interacts with Lva. Interacts with Ten-m. A substantial pool of maternal protein in the egg undergoes dynamic changes in distribution early in embryogenesis. In gastrulated embryo, the highest level of protein is found in the respiratory tract cells and the lowest in parts of the forming gut.

The protein localises to the cytoplasm. It localises to the cytoskeleton. Its subcellular location is the golgi apparatus. The protein resides in the cell projection. It is found in the cilium. The protein localises to the flagellum. Functionally, spectrin is the major constituent of the cytoskeletal network underlying the erythrocyte plasma membrane. It associates with band 4.1 and actin to form the cytoskeletal superstructure of the erythrocyte plasma membrane. Essential for larval survival and development. Stabilizes cell to cell interactions that are critical for the maintenance of cell shape and subcellular organization within embryonic tissues. Lva and spectrin may form a Golgi-based scaffold that mediates interaction of Golgi bodies with microtubules and facilitates Golgi-derived membrane secretion required for the formation of furrows during cellularization. This is Spectrin alpha chain (alpha-Spec) from Drosophila melanogaster (Fruit fly).